The following is a 478-amino-acid chain: Pyrrolysine--tRNA ligase (478 aa).

The tract at residues 106–188 is disordered; that stretch reads VMPKSVARTP…TSAMPASTSA (83 aa). Residues 122 to 132 show a composition bias toward polar residues; sequence APVQTLPSESQ. The segment covering 133 to 188 has biased composition (low complexity); it reads PAPTTPISASTTAPASTSTTAPAPASTTAPAPASTTAPASASTTISTSAMPASTSA.

Belongs to the class-II aminoacyl-tRNA synthetase family.

It is found in the cytoplasm. It carries out the reaction tRNA(Pyl) + L-pyrrolysine + ATP = L-pyrrolysyl-tRNA(Pyl) + AMP + diphosphate. Its function is as follows. Catalyzes the attachment of pyrrolysine to tRNA(Pyl). Pyrrolysine is a lysine derivative encoded by the termination codon UAG. This chain is Pyrrolysine--tRNA ligase, found in Methanosarcina thermophila.